The following is a 449-amino-acid chain: Tubulin alpha-1C chain (449 aa).

The MREC motif motif lies at 1 to 4 (MREC). A GTP-binding site is contributed by Q11. At K40 the chain carries N6-acetyllysine. Positions 71, 140, 144, 145, 179, 206, and 228 each coordinate GTP. Mg(2+) is bound at residue E71. E254 is a catalytic residue. Residue Y282 is modified to 3'-nitrotyrosine. Y432 is subject to Phosphotyrosine. A Phosphoserine modification is found at S439. Y449 carries the post-translational modification 3'-nitrotyrosine.

Belongs to the tubulin family. As to quaternary structure, dimer of alpha and beta chains. A typical microtubule is a hollow water-filled tube with an outer diameter of 25 nm and an inner diameter of 15 nM. Alpha-beta heterodimers associate head-to-tail to form protofilaments running lengthwise along the microtubule wall with the beta-tubulin subunit facing the microtubule plus end conferring a structural polarity. Microtubules usually have 13 protofilaments but different protofilament numbers can be found in some organisms and specialized cells. Mg(2+) serves as cofactor. Post-translationally, some glutamate residues at the C-terminus are polyglycylated, resulting in polyglycine chains on the gamma-carboxyl group. Glycylation is mainly limited to tubulin incorporated into axonemes (cilia and flagella) whereas glutamylation is prevalent in neuronal cells, centrioles, axonemes, and the mitotic spindle. Both modifications can coexist on the same protein on adjacent residues, and lowering polyglycylation levels increases polyglutamylation, and reciprocally. Cilia and flagella glycylation is required for their stability and maintenance. Flagella glycylation controls sperm motility. In terms of processing, some glutamate residues at the C-terminus are polyglutamylated, resulting in polyglutamate chains on the gamma-carboxyl group. Polyglutamylation plays a key role in microtubule severing by spastin (SPAST). SPAST preferentially recognizes and acts on microtubules decorated with short polyglutamate tails: severing activity by SPAST increases as the number of glutamates per tubulin rises from one to eight, but decreases beyond this glutamylation threshold. Glutamylation is also involved in cilia motility. Acetylation of alpha chains at Lys-40 is located inside the microtubule lumen. This modification has been correlated with increased microtubule stability, intracellular transport and ciliary assembly. Post-translationally, methylation of alpha chains at Lys-40 is found in mitotic microtubules and is required for normal mitosis and cytokinesis contributing to genomic stability. In terms of processing, nitration of Tyr-449 is irreversible and interferes with normal dynein intracellular distribution. Undergoes a tyrosination/detyrosination cycle, the cyclic removal and re-addition of a C-terminal tyrosine residue by the enzymes tubulin tyrosine carboxypeptidase (MATCAP1, VASH1 or VASH2) and tubulin tyrosine ligase (TTL), respectively. Post-translationally, tyrosination promotes microtubule interaction with CAP-Gly domain-containing proteins such as CLIP1, CLIP2 and DCTN1. Tyrosination regulates the initiation of dynein-dynactin motility via interaction with DCTN1, which brings the dynein-dynactin complex into contact with microtubules. In neurons, tyrosinated tubulins mediate the initiation of retrograde vesicle transport. In terms of processing, detyrosination is involved in metaphase plate congression by guiding chromosomes during mitosis: detyrosination promotes interaction with CENPE, promoting pole-proximal transport of chromosomes toward the equator. Detyrosination increases microtubules-dependent mechanotransduction in dystrophic cardiac and skeletal muscle. In cardiomyocytes, detyrosinated microtubules are required to resist to contractile compression during contraction: detyrosination promotes association with desmin (DES) at force-generating sarcomeres, leading to buckled microtubules and mechanical resistance to contraction.

Its subcellular location is the cytoplasm. It localises to the cytoskeleton. It catalyses the reaction GTP + H2O = GDP + phosphate + H(+). Tubulin is the major constituent of microtubules, a cylinder consisting of laterally associated linear protofilaments composed of alpha- and beta-tubulin heterodimers. Microtubules grow by the addition of GTP-tubulin dimers to the microtubule end, where a stabilizing cap forms. Below the cap, tubulin dimers are in GDP-bound state, owing to GTPase activity of alpha-tubulin. This chain is Tubulin alpha-1C chain (Tuba1c), found in Rattus norvegicus (Rat).